The following is a 485-amino-acid chain: REST corepressor 1 (485 aa).

2 disordered regions span residues 1–26 (MPAM…ASAS) and 49–110 (AAAS…VGPQ). Low complexity-rich tracts occupy residues 49–64 (AAAS…AAAA) and 74–95 (AAAA…SGSS). The interval 78–257 (PNGNSSSNSW…RHARKQKRER (180 aa)) is interaction with HDAC1. One can recognise an ELM2 domain in the interval 103-189 (GGMRVGPQYQ…KSLADLPNFT (87 aa)). K122 is covalently cross-linked (Glycyl lysine isopeptide (Lys-Gly) (interchain with G-Cter in SUMO2)). S127 carries the phosphoserine modification. Residues 190-241 (PFPDEWTVEDKVLFEQAFSFHGKTFHRIQQMLPDKSIASLVKFYYSWKKTRT) form the SANT 1 domain. A coiled-coil region spans residues 244–273 (SVMDRHARKQKREREESEDELEEANGNNPI). A disordered region spans residues 244–314 (SVMDRHARKQ…AKNRAKRKPP (71 aa)). The residue at position 260 (S260) is a Phosphoserine. Over residues 278-288 (DQNKESKKEVP) the composition is skewed to basic and acidic residues. The segment at 296-384 (VKKEKHSTQA…LPEVIQKCNA (89 aa)) is interaction with KDM1A. K297 participates in a covalent cross-link: Glycyl lysine isopeptide (Lys-Gly) (interchain with G-Cter in SUMO2). Residues 334–369 (ATTVLRQLDMELVSVKRQIQNIKQTNSALKEKLDGG) are a coiled coil. The region spanning 381–432 (KCNARWTTEEQLLAVQAIRKYGRDFQAISDVIGNKSVVQVKNFFVNYRRRFN) is the SANT 2 domain. The tract at residues 442–485 (AEHGKEETNGPSNQKPVKSPDNSIKMPEEEDEAPVLDVRYASAS) is disordered. Residues 450–463 (NGPSNQKPVKSPDN) are compositionally biased toward polar residues. A Phosphoserine modification is found at S460. K466 is covalently cross-linked (Glycyl lysine isopeptide (Lys-Gly) (interchain with G-Cter in SUMO2)).

This sequence belongs to the CoREST family. In terms of assembly, interacts directly with GFI1 and GFI1B in a RCOR/GFI/KDM1A/HDAC complex. Interacts with INMS1. Component of a BHC histone deacetylase complex that contains HDAC1, HDAC2, HMG20B/BRAF35, KDM1A, RCOR1/CoREST and PHF21A/BHC80. The BHC complex may also contain ZMYM2, ZNF217, ZMYM3, GSE1 and GTF2I. Interacts with REST. Interacts with the SMARCE1/BAF57, suggesting that the BHC complex may recruit the ATP-dependent chromatin-remodeling SWI-SNF complex. Interacts with SOX2. (Microbial infection) Interacts with herpes virus HSV-1 ICP0 protein; the interaction leads to the disruption of the BHC complex, thereby preventing the BHC complex from repressing transcription of viral genes. Phosphorylated by HSV-1 protein kinases in case of infection. In terms of tissue distribution, ubiquitously expressed.

Its subcellular location is the nucleus. Its function is as follows. Essential component of the BHC complex, a corepressor complex that represses transcription of neuron-specific genes in non-neuronal cells. The BHC complex is recruited at RE1/NRSE sites by REST and acts by deacetylating and demethylating specific sites on histones, thereby acting as a chromatin modifier. In the BHC complex, it serves as a molecular beacon for the recruitment of molecular machinery, including MeCP2 and SUV39H1, that imposes silencing across a chromosomal interval. Plays a central role in demethylation of Lys-4 of histone H3 by promoting demethylase activity of KDM1A on core histones and nucleosomal substrates. It also protects KDM1A from the proteasome. Component of a RCOR/GFI/KDM1A/HDAC complex that suppresses, via histone deacetylase (HDAC) recruitment, a number of genes implicated in multilineage blood cell development and controls hematopoietic differentiation. In Homo sapiens (Human), this protein is REST corepressor 1 (RCOR1).